The chain runs to 513 residues: Protein indeterminate-domain 11 (513 aa).

Residues 1–84 are disordered; that stretch reads MMNKDMLLHQ…QPGNPDPESE (84 aa). Residues 10-45 are compositionally biased toward polar residues; sequence QHQQPQQDENMSNLTSASGDQASVSSGNITEASGSN. Over residues 51–60 the composition is skewed to low complexity; sequence QQQQEQQQQQ. S89 carries the post-translational modification Phosphoserine. 2 C2H2-type zinc fingers span residues 99–121 and 141–171; these read FVCE…RRGH and YVCP…CRKH. Positions 163-170 match the Nuclear localization signal motif; it reads IKKHFCRK. The C2H2-type 2; degenerate zinc-finger motif lies at 176–199; sequence WKCDKCSKKYAVQSDCKAHSKTCG. Zn(2+) is bound by residues C178, C181, H194, C198, C205, C207, H220, and C224. The segment at 203–226 adopts a CCHC-type 2; atypical zinc-finger fold; sequence YRCDCGTLFSRRDSFITHRAFCEA. An SHR-binding region spans residues 213–225; that stretch reads RRDSFITHRAFCE. Disordered stretches follow at residues 255 to 280 and 334 to 358; these read ASHP…SHNH and PQPH…SLFS. The span at 264–280 shows a compositional bias: low complexity; sequence TQPTINVSSSSSSSHNH.

It localises to the nucleus. Functionally, probable transcription factor. In Arabidopsis thaliana (Mouse-ear cress), this protein is Protein indeterminate-domain 11.